The primary structure comprises 274 residues: UPF0173 metal-dependent hydrolase A2cp1_1196 (274 aa).

This sequence belongs to the UPF0173 family.

The protein is UPF0173 metal-dependent hydrolase A2cp1_1196 of Anaeromyxobacter dehalogenans (strain 2CP-1 / ATCC BAA-258).